We begin with the raw amino-acid sequence, 929 residues long: Isoleucine--tRNA ligase (929 aa).

A 'HIGH' region motif is present at residues 57 to 67; that stretch reads PYANGNIHVGH. Position 554 (glutamate 554) interacts with L-isoleucyl-5'-AMP. A 'KMSKS' region motif is present at residues 595 to 599; sequence KMSKS. Lysine 598 serves as a coordination point for ATP. Cysteine 888, cysteine 891, cysteine 908, and cysteine 911 together coordinate Zn(2+).

This sequence belongs to the class-I aminoacyl-tRNA synthetase family. IleS type 1 subfamily. Monomer. The cofactor is Zn(2+).

It localises to the cytoplasm. It catalyses the reaction tRNA(Ile) + L-isoleucine + ATP = L-isoleucyl-tRNA(Ile) + AMP + diphosphate. Its function is as follows. Catalyzes the attachment of isoleucine to tRNA(Ile). As IleRS can inadvertently accommodate and process structurally similar amino acids such as valine, to avoid such errors it has two additional distinct tRNA(Ile)-dependent editing activities. One activity is designated as 'pretransfer' editing and involves the hydrolysis of activated Val-AMP. The other activity is designated 'posttransfer' editing and involves deacylation of mischarged Val-tRNA(Ile). This Streptococcus thermophilus (strain CNRZ 1066) protein is Isoleucine--tRNA ligase.